The primary structure comprises 293 residues: N-acetylneuraminate lyase (293 aa).

Residues serine 48 and serine 49 each contribute to the aceneuramate site. The active-site Proton donor is tyrosine 137. Catalysis depends on lysine 165, which acts as the Schiff-base intermediate with substrate. Residues threonine 167, glycine 189, aspartate 191, glutamate 192, and serine 208 each coordinate aceneuramate.

Belongs to the DapA family. NanA subfamily. Homotetramer.

It localises to the cytoplasm. It catalyses the reaction aceneuramate = aldehydo-N-acetyl-D-mannosamine + pyruvate. It participates in amino-sugar metabolism; N-acetylneuraminate degradation; D-fructose 6-phosphate from N-acetylneuraminate: step 1/5. Its function is as follows. Catalyzes the reversible aldol cleavage of N-acetylneuraminic acid (sialic acid; Neu5Ac) to form pyruvate and N-acetylmannosamine (ManNAc) via a Schiff base intermediate. In Staphylococcus aureus (strain MRSA252), this protein is N-acetylneuraminate lyase.